The following is a 653-amino-acid chain: tRNA-guanine(15) transglycosylase (653 aa).

Asp-91 acts as the Nucleophile in catalysis. Residues Asp-126 and Ala-193 each coordinate substrate. Zn(2+)-binding residues include Cys-276, Cys-278, and Cys-281. In terms of domain architecture, PUA spans 578–653; that stretch reads AWRVAVNEES…QAVKTRKGGF (76 aa).

Belongs to the archaeosine tRNA-ribosyltransferase family. The cofactor is Zn(2+).

The enzyme catalyses guanosine(15) in tRNA + 7-cyano-7-deazaguanine = 7-cyano-7-carbaguanosine(15) in tRNA + guanine. It functions in the pathway tRNA modification; archaeosine-tRNA biosynthesis. Functionally, exchanges the guanine residue with 7-cyano-7-deazaguanine (preQ0) at position 15 in the dihydrouridine loop (D-loop) of archaeal tRNAs. This chain is tRNA-guanine(15) transglycosylase, found in Methanothermobacter thermautotrophicus (strain ATCC 29096 / DSM 1053 / JCM 10044 / NBRC 100330 / Delta H) (Methanobacterium thermoautotrophicum).